Here is a 120-residue protein sequence, read N- to C-terminus: NAD(P)H-quinone oxidoreductase subunit 3, chloroplastic (120 aa).

3 helical membrane-spanning segments follow: residues 7–27 (YQTF…ALLI), 64–84 (SFAL…PWAM), and 89–109 (LGIF…IGLV).

Belongs to the complex I subunit 3 family. As to quaternary structure, NDH is composed of at least 16 different subunits, 5 of which are encoded in the nucleus.

It is found in the plastid. The protein resides in the chloroplast thylakoid membrane. The enzyme catalyses a plastoquinone + NADH + (n+1) H(+)(in) = a plastoquinol + NAD(+) + n H(+)(out). The catalysed reaction is a plastoquinone + NADPH + (n+1) H(+)(in) = a plastoquinol + NADP(+) + n H(+)(out). Its function is as follows. NDH shuttles electrons from NAD(P)H:plastoquinone, via FMN and iron-sulfur (Fe-S) centers, to quinones in the photosynthetic chain and possibly in a chloroplast respiratory chain. The immediate electron acceptor for the enzyme in this species is believed to be plastoquinone. Couples the redox reaction to proton translocation, and thus conserves the redox energy in a proton gradient. This chain is NAD(P)H-quinone oxidoreductase subunit 3, chloroplastic, found in Psilotum nudum (Whisk fern).